Here is a 552-residue protein sequence, read N- to C-terminus: Probable ABC transporter ATP-binding/permease protein HI_0664 (552 aa).

A run of 6 helical transmembrane segments spans residues 22–42, 52–72, 139–159, 162–182, 253–273, and 278–298; these read IMAFTITMGTLGFLAAIFIMV, LNFDTHLSFSGILTALIVLAV, IAPIMIAFFTSAILLLVFAQL, WFVLVALAAYLTVGVILPIIT, EVAVSVFNIIMLFTGLILFSL, and FAAFLIGVILLMSSYGPVIAL. Positions 23-307 constitute an ABC transmembrane type-1 domain; it reads MAFTITMGTL…LSNLSSNLLQ (285 aa). One can recognise an ABC transporter domain in the interval 340 to 552; that stretch reads IDVENVNFAY…VIGIENGRMS (213 aa). 372–379 provides a ligand contact to ATP; that stretch reads GRSGSGKS.

This sequence belongs to the ABC transporter superfamily. Lipid exporter (TC 3.A.1.106) family.

Its subcellular location is the cell inner membrane. In Haemophilus influenzae (strain ATCC 51907 / DSM 11121 / KW20 / Rd), this protein is Probable ABC transporter ATP-binding/permease protein HI_0664.